The sequence spans 210 residues: UPF0301 protein CPS_1252 (210 aa).

It belongs to the UPF0301 (AlgH) family.

This Colwellia psychrerythraea (strain 34H / ATCC BAA-681) (Vibrio psychroerythus) protein is UPF0301 protein CPS_1252.